A 794-amino-acid polypeptide reads, in one-letter code: PAN2-PAN3 deadenylation complex subunit PAN3 (794 aa).

Residues 7 to 36 (SAKDVLCKNILIYGYCKFQDKGCAFSHNKQ) form a C3H1-type zinc finger. Disordered stretches follow at residues 40–97 (PQQQ…TQSK) and 187–226 (AQVG…QQQL). 2 stretches are compositionally biased toward polar residues: residues 83 to 94 (IQSNGMVNSQET) and 189 to 199 (VGNNPGSTAPA). The segment covering 200–226 (NLQLQQKQPQQPQQPQQPQQHQQQQQL) has biased composition (low complexity). The segment at 372–668 (QTMQHLSLPD…MDQFILQYIS (297 aa)) is pseudokinase domain. Residues arginine 425 and 494-501 (DYYPNLTT) contribute to the ATP site. A coiled-coil region spans residues 669–707 (SHFMTLMNKLQNSHDWVELQLSTELENARLFRLMTKINF). The knob domain stretch occupies residues 708–794 (IISEMPTYDL…IDTQFRLLRG (87 aa)).

It belongs to the protein kinase superfamily. PAN3 family. In terms of assembly, homodimer. Forms a heterotrimer with a catalytic subunit PAN2 to form the poly(A)-nuclease (PAN) deadenylation complex. Interacts (via PAM-2 motif) with poly(A)-binding protein PAB1 (via PABC domain), conferring substrate specificity of the enzyme complex.

It localises to the cytoplasm. Its function is as follows. Regulatory subunit of the poly(A)-nuclease (PAN) deadenylation complex, one of two cytoplasmic mRNA deadenylases involved in mRNA turnover. PAN specifically shortens poly(A) tails of RNA and the activity is stimulated by poly(A)-binding protein PAB1. PAN deadenylation is followed by rapid degradation of the shortened mRNA tails by the CCR4-NOT complex. Deadenylated mRNAs are then degraded by two alternative mechanisms, namely exosome-mediated 3'-5' exonucleolytic degradation, or deadenylation-dependent mRNA decaping and subsequent 5'-3' exonucleolytic degradation by XRN1. May also be involved in post-transcriptional maturation of mRNA poly(A) tails. PAN3 acts as a positive regulator for PAN activity, recruiting the catalytic subunit PAN2 to mRNA via its interaction with RNA and with PAB1. In Lodderomyces elongisporus (strain ATCC 11503 / CBS 2605 / JCM 1781 / NBRC 1676 / NRRL YB-4239) (Yeast), this protein is PAN2-PAN3 deadenylation complex subunit PAN3.